A 1579-amino-acid chain; its full sequence is Pentafunctional AROM polypeptide (1579 aa).

A 3-dehydroquinate synthase region spans residues 1–391 (MKVELSKVPI…YGTSAHVVSD (391 aa)). NAD(+)-binding positions include 44–46 (DTN), 79–82 (EAHK), 110–112 (GGV), and Asp115. Position 126 (Arg126) interacts with 7-phospho-2-dehydro-3-deoxy-D-arabino-heptonate. 135–136 (TS) serves as a coordination point for NAD(+). 7-phospho-2-dehydro-3-deoxy-D-arabino-heptonate contacts are provided by Asp142 and Lys148. NAD(+) is bound at residue Lys157. Asn158 lines the 7-phospho-2-dehydro-3-deoxy-D-arabino-heptonate pocket. Residues 175–178 (WLET) and Asn186 each bind NAD(+). A Zn(2+)-binding site is contributed by Glu190. 7-phospho-2-dehydro-3-deoxy-D-arabino-heptonate-binding positions include 190-193 (EVIK) and Lys257. Glu267 acts as the Proton acceptor; for 3-dehydroquinate synthase activity in catalysis. 7-phospho-2-dehydro-3-deoxy-D-arabino-heptonate is bound by residues 271 to 275 (RNLLN) and His278. Zn(2+) is bound at residue His278. Catalysis depends on His282, which acts as the Proton acceptor; for 3-dehydroquinate synthase activity. Positions 294 and 363 each coordinate 7-phospho-2-dehydro-3-deoxy-D-arabino-heptonate. His294 provides a ligand contact to Zn(2+). The segment at 404-862 (VYPFKTLENG…WDVLHTQLGA (459 aa)) is EPSP synthase. Cys844 functions as the For EPSP synthase activity in the catalytic mechanism. The segment at 881–1070 (SIVIIGMRAA…IPTNRSSFVC (190 aa)) is shikimate kinase. 886 to 893 (GMRAAGKT) is an ATP binding site. Residues 1071–1283 (LTFDDLAAHK…SAPGQLTLSQ (213 aa)) form a 3-dehydroquinase region. His1188 serves as the catalytic Proton acceptor; for 3-dehydroquinate dehydratase activity. Lys1217 functions as the Schiff-base intermediate with substrate; for 3-dehydroquinate dehydratase activity in the catalytic mechanism. The segment at 1296–1579 (AKNFYVVGSP…IYSAVTEEQA (284 aa)) is shikimate dehydrogenase.

It in the N-terminal section; belongs to the sugar phosphate cyclases superfamily. Dehydroquinate synthase family. The protein in the 2nd section; belongs to the EPSP synthase family. This sequence in the 3rd section; belongs to the shikimate kinase family. In the 4th section; belongs to the type-I 3-dehydroquinase family. It in the C-terminal section; belongs to the shikimate dehydrogenase family. As to quaternary structure, homodimer. The cofactor is Zn(2+).

It is found in the cytoplasm. The enzyme catalyses 7-phospho-2-dehydro-3-deoxy-D-arabino-heptonate = 3-dehydroquinate + phosphate. It catalyses the reaction 3-dehydroquinate = 3-dehydroshikimate + H2O. It carries out the reaction shikimate + NADP(+) = 3-dehydroshikimate + NADPH + H(+). The catalysed reaction is shikimate + ATP = 3-phosphoshikimate + ADP + H(+). The enzyme catalyses 3-phosphoshikimate + phosphoenolpyruvate = 5-O-(1-carboxyvinyl)-3-phosphoshikimate + phosphate. It functions in the pathway metabolic intermediate biosynthesis; chorismate biosynthesis; chorismate from D-erythrose 4-phosphate and phosphoenolpyruvate: step 2/7. It participates in metabolic intermediate biosynthesis; chorismate biosynthesis; chorismate from D-erythrose 4-phosphate and phosphoenolpyruvate: step 3/7. The protein operates within metabolic intermediate biosynthesis; chorismate biosynthesis; chorismate from D-erythrose 4-phosphate and phosphoenolpyruvate: step 4/7. Its pathway is metabolic intermediate biosynthesis; chorismate biosynthesis; chorismate from D-erythrose 4-phosphate and phosphoenolpyruvate: step 5/7. It functions in the pathway metabolic intermediate biosynthesis; chorismate biosynthesis; chorismate from D-erythrose 4-phosphate and phosphoenolpyruvate: step 6/7. In terms of biological role, the AROM polypeptide catalyzes 5 consecutive enzymatic reactions in prechorismate polyaromatic amino acid biosynthesis. This Lachancea thermotolerans (strain ATCC 56472 / CBS 6340 / NRRL Y-8284) (Yeast) protein is Pentafunctional AROM polypeptide.